A 158-amino-acid chain; its full sequence is Secreted RxLR effector protein 131 (158 aa).

The N-terminal stretch at 1-20 (MRQIPLVVVLLLAYAARLQG) is a signal peptide. The RxLR-dEER motif lies at 39 to 57 (RDLDGSTTSMSVNVDDEER). The segment at 120–158 (KGNVKYLAIIYVICILSVLGILGTVFAINRNISNQYIHE) is host BKI1-binding. A helical membrane pass occupies residues 127-147 (AIIYVICILSVLGILGTVFAI). Asn-150 is a glycosylation site (N-linked (GlcNAc...) asparagine).

Belongs to the RxLR effector family. Interacts with host BKI1.

The protein resides in the secreted. It is found in the host cell membrane. Its function is as follows. Secreted effector that suppresses pathogen-associated molecular pattern (PAMP)-triggered immunity (PTI) in host plants. Suppresses both defense-related brassinosteroid (BR) and ERECTA (ER) signaling pathways in planta by interacting with host BRI1 kinase inhibitor 1 (BKI1) at the host plasma membrane, leading to a host dwarf phenotype. This chain is Secreted RxLR effector protein 131, found in Plasmopara viticola (Downy mildew of grapevine).